Consider the following 89-residue polypeptide: Putative regulatory protein CYA_2696 (89 aa).

This sequence belongs to the RemA family.

The chain is Putative regulatory protein CYA_2696 from Synechococcus sp. (strain JA-3-3Ab) (Cyanobacteria bacterium Yellowstone A-Prime).